Reading from the N-terminus, the 394-residue chain is Chorismate synthase (394 aa).

NADP(+) is bound at residue R48. The interval 52–90 (QSMITTSRGEPDEVSIQSGLQDGYTTGTPIGMTIENKDA) is disordered. A compositionally biased stretch (polar residues) spans 66–79 (SIQSGLQDGYTTGT). Residues 125 to 127 (RSS), G297, 312 to 316 (HAPTS), and R339 each bind FMN.

It belongs to the chorismate synthase family. FMNH2 serves as cofactor.

It carries out the reaction 5-O-(1-carboxyvinyl)-3-phosphoshikimate = chorismate + phosphate. It participates in metabolic intermediate biosynthesis; chorismate biosynthesis; chorismate from D-erythrose 4-phosphate and phosphoenolpyruvate: step 7/7. Functionally, catalyzes the anti-1,4-elimination of the C-3 phosphate and the C-6 proR hydrogen from 5-enolpyruvylshikimate-3-phosphate (EPSP) to yield chorismate, which is the branch point compound that serves as the starting substrate for the three terminal pathways of aromatic amino acid biosynthesis. This reaction introduces a second double bond into the aromatic ring system. This chain is Chorismate synthase, found in Halobacterium salinarum (strain ATCC 700922 / JCM 11081 / NRC-1) (Halobacterium halobium).